The chain runs to 302 residues: 4-hydroxy-tetrahydrodipicolinate synthase (302 aa).

Thr46 is a pyruvate binding site. The active-site Proton donor/acceptor is the Tyr135. Lys164 functions as the Schiff-base intermediate with substrate in the catalytic mechanism. Val206 serves as a coordination point for pyruvate.

Belongs to the DapA family. Homotetramer; dimer of dimers.

It is found in the cytoplasm. It catalyses the reaction L-aspartate 4-semialdehyde + pyruvate = (2S,4S)-4-hydroxy-2,3,4,5-tetrahydrodipicolinate + H2O + H(+). It participates in amino-acid biosynthesis; L-lysine biosynthesis via DAP pathway; (S)-tetrahydrodipicolinate from L-aspartate: step 3/4. Functionally, catalyzes the condensation of (S)-aspartate-beta-semialdehyde [(S)-ASA] and pyruvate to 4-hydroxy-tetrahydrodipicolinate (HTPA). This is 4-hydroxy-tetrahydrodipicolinate synthase from Acidobacterium capsulatum (strain ATCC 51196 / DSM 11244 / BCRC 80197 / JCM 7670 / NBRC 15755 / NCIMB 13165 / 161).